We begin with the raw amino-acid sequence, 2766 residues long: PDZ domain-containing protein 2 (2766 aa).

A PDZ 1 domain is found at 85-177; it reads LSFGNIPVFG…GGFIYLIMLR (93 aa). 2 disordered regions span residues 189–315 and 419–452; these read GNSG…KTGK and MPGS…KLKS. Acidic residues predominate over residues 242–254; that stretch reads TADDPNSELENGA. Positions 280–296 are enriched in basic and acidic residues; sequence HLERSEADSEVELRVPK. Positions 334–419 constitute a PDZ 2 domain; that stretch reads KMELLKESDG…MVQLVVASKM (86 aa). Serine 517 carries the post-translational modification Phosphoserine. The region spanning 535–621 is the PDZ 3 domain; sequence IIGLYKEKGK…GLFVLTVRTK (87 aa). Polar residues predominate over residues 627–636; that stretch reads LTPCSTPTHM. A disordered region spans residues 627-673; that stretch reads LTPCSTPTHMSRSSSPSFNTNSGGTPAGGGQEEGGSSSLGRKAPGPK. Low complexity predominate over residues 637 to 650; that stretch reads SRSSSPSFNTNSGG. The PDZ 4 domain occupies 679–764; sequence EVTLNKEPRV…GPVRLVIGRH (86 aa). A compositionally biased stretch (polar residues) spans 783–794; that stretch reads YQESREANSSPG. Disordered stretches follow at residues 783-803 and 834-853; these read YQES…KSPS and AGSE…EDGS. Serine 891 and serine 895 each carry phosphoserine. Disordered regions lie at residues 915–966, 990–1425, 1456–1531, 1725–1909, 1924–1967, 2015–2070, 2146–2174, 2262–2397, 2424–2450, and 2465–2496; these read NGGS…KQEE, HSIL…PSVL, ISLS…CPGT, DSQG…LPEQ, DTSC…IRQS, ERVP…ASQV, FSSH…AMGG, DRPT…ERRT, QLEI…GHAD, and TRAY…WATP. Acidic residues predominate over residues 918 to 927; the sequence is SDDEDFDGEG. Positions 1021–1038 are enriched in basic and acidic residues; it reads GRKEMSGSRSSPKLEYRV. Polar residues-rich tracts occupy residues 1040–1061, 1126–1137, and 1189–1220; these read TDTQ…SENL, PGDSSVPTNCGP, and SETP…SQGI. Low complexity-rich tracts occupy residues 1379–1393 and 1456–1471; these read SQPP…SHHA and ISLS…SPSS. Serine 1767 is subject to Phosphoserine. Positions 1797–1806 are enriched in basic residues; it reads CSPKLKRLNS. Positions 1884-1901 are enriched in polar residues; that stretch reads LRTSASDTSIRTFTSPLT. Low complexity-rich tracts occupy residues 1924 to 1937 and 1947 to 1963; these read DTSC…PRSG and SGSA…ALAG. Composition is skewed to low complexity over residues 2280–2296 and 2305–2321; these read PPIN…GSPS and RSLS…SSLL. Composition is skewed to polar residues over residues 2322 to 2347 and 2362 to 2372; these read PQMT…SNKG and PTSTVSPASPS. In terms of domain architecture, PDZ 5 spans 2550–2634; the sequence is FIVLNKKEGS…HKHALMIIKK (85 aa). Residues 2635 to 2667 are disordered; it reads GNDQPGPSFKQEPPSANGKGPFPRRTLPLEPGA. The PDZ 6 domain maps to 2678-2763; the sequence is CVEVLKTSAG…GPVQLVIRKH (86 aa).

As to quaternary structure, interacts with SCN10A, CTNND2 and PKP4. In terms of processing, a secreted form is produced by caspase-mediated proteolytic cleavage. Expressed in the heart, liver, brain, spleen, lung, kidney, testis and skeletal muscle.

It is found in the nucleus. It localises to the cytoplasm. The protein resides in the endoplasmic reticulum. Its subcellular location is the cell junction. The protein localises to the secreted. This is PDZ domain-containing protein 2 (Pdzd2) from Rattus norvegicus (Rat).